The primary structure comprises 169 residues: NADH-quinone oxidoreductase subunit B (169 aa).

4 residues coordinate [4Fe-4S] cluster: C42, C43, C107, and C136.

The protein belongs to the complex I 20 kDa subunit family. In terms of assembly, NDH-1 is composed of 14 different subunits. Subunits NuoB, C, D, E, F, and G constitute the peripheral sector of the complex. [4Fe-4S] cluster serves as cofactor.

The protein resides in the cell inner membrane. The catalysed reaction is a quinone + NADH + 5 H(+)(in) = a quinol + NAD(+) + 4 H(+)(out). NDH-1 shuttles electrons from NADH, via FMN and iron-sulfur (Fe-S) centers, to quinones in the respiratory chain. The immediate electron acceptor for the enzyme in this species is believed to be ubiquinone. Couples the redox reaction to proton translocation (for every two electrons transferred, four hydrogen ions are translocated across the cytoplasmic membrane), and thus conserves the redox energy in a proton gradient. This Wolinella succinogenes (strain ATCC 29543 / DSM 1740 / CCUG 13145 / JCM 31913 / LMG 7466 / NCTC 11488 / FDC 602W) (Vibrio succinogenes) protein is NADH-quinone oxidoreductase subunit B.